A 172-amino-acid polypeptide reads, in one-letter code: L-amino acid N-acyltransferase MnaT (172 aa).

Residues 1 to 163 (MSIRFARKAD…DLTFMQLQLD (163 aa)) form the N-acetyltransferase domain. Residues 85–87 (VYV), 93–98 (GKGLGR), asparagine 124, and serine 133 contribute to the acetyl-CoA site.

It belongs to the acetyltransferase family. PAT/BAR subfamily.

The catalysed reaction is L-methionine + acetyl-CoA = N-acetyl-L-methionine + CoA + H(+). The enzyme catalyses propanoyl-CoA + L-methionine = N-propanoyl-L-methioninate + CoA + H(+). It carries out the reaction L-alpha-phenylglycine + acetyl-CoA = N-acetyl-L-alpha-phenylglycine + CoA + H(+). It catalyses the reaction L-methionine sulfoximine + acetyl-CoA = N-acetyl-L-methionine sulfoximine + CoA + H(+). The catalysed reaction is L-methionine sulfone + acetyl-CoA = N-acetyl-L-methionine sulfone + CoA + H(+). In terms of biological role, acyltransferase that appears to be required for E.coli optimal growth rate and yield via the formation of N-acetylated amino acids. Catalyzes the acylation of L-methionine using acetyl-CoA or propanoyl-CoA as acyl donors, and the acetylation of L-phenylglycine. Is also able to N-acylate other free L-amino acids and their derivatives using a CoA thioester as cosubstrate. Using acetyl-CoA as an acyl donor, substrate specificity is methionine sulfone &gt; methionine sulfoximine &gt; methionine sulfoxide &gt; methionine. Asparagine, lysine, glutamine, aspartate and glutamate are very poor substrates. Using methionine as a substrate, acyl donor preference is propanoyl-CoA &gt; acetyl-CoA &gt;&gt; butyryl-CoA. Likely plays a role in the resistance against the toxic effects of L-methionine sulfoximine (MSX), via its ability to catalyze its acetylation; MSX is a rare amino acid which inhibits glutamine synthetase (GlnA). The sequence is that of L-amino acid N-acyltransferase MnaT from Escherichia coli (strain K12).